The sequence spans 201 residues: 3-isopropylmalate dehydratase small subunit (201 aa).

This sequence belongs to the LeuD family. LeuD type 1 subfamily. In terms of assembly, heterodimer of LeuC and LeuD.

It carries out the reaction (2R,3S)-3-isopropylmalate = (2S)-2-isopropylmalate. It functions in the pathway amino-acid biosynthesis; L-leucine biosynthesis; L-leucine from 3-methyl-2-oxobutanoate: step 2/4. Catalyzes the isomerization between 2-isopropylmalate and 3-isopropylmalate, via the formation of 2-isopropylmaleate. This is 3-isopropylmalate dehydratase small subunit from Escherichia coli O45:K1 (strain S88 / ExPEC).